The primary structure comprises 194 residues: PRELI domain containing protein 3B (194 aa).

The 172-residue stretch at 1 to 172 (MKIWTSEHVF…VIHKLNAEIE (172 aa)) folds into the PRELI/MSF1 domain. 2 positions are modified to phosphoserine: serine 46 and serine 51.

This sequence belongs to the slowmo family.

This is PRELI domain containing protein 3B (PRELID3B) from Macaca fascicularis (Crab-eating macaque).